The chain runs to 78 residues: MKEFLAYIIKNLVDRPEEVRIKEVQGTHTIIYELSVAKPDIGKIIGKEGRTIKAIRTLLVSVASRNNVRVSLEIMEEK.

Residues T29–K78 form the KH domain.

Belongs to the KhpA RNA-binding protein family.

Its subcellular location is the cytoplasm. Its function is as follows. A probable RNA-binding protein. This is RNA-binding protein KhpA from Chlamydia pneumoniae (Chlamydophila pneumoniae).